The following is a 619-amino-acid chain: ATP-dependent zinc metalloprotease FtsH (619 aa).

Topologically, residues 1-11 are cytoplasmic; it reads MDKQSKFRIKT. The chain crosses the membrane as a helical span at residues 12 to 32; it reads FFKKIIFFLIIFCFFYFFNFI. Residues 33–131 are Periplasmic-facing; sequence KKTKKITHTT…FKNYKIYTVL (99 aa). The chain crosses the membrane as a helical span at residues 132–152; that stretch reads NFFYDYGFFLMIIIICWIFIF. Over 153 to 619 the chain is Cytoplasmic; that stretch reads RKIASRSSES…FKEDFASILD (467 aa). 224 to 231 contributes to the ATP binding site; the sequence is GPPGTGKT. Residue histidine 447 participates in Zn(2+) binding. Residue glutamate 448 is part of the active site. Zn(2+) is bound by residues histidine 451 and aspartate 522.

The protein in the central section; belongs to the AAA ATPase family. In the C-terminal section; belongs to the peptidase M41 family. In terms of assembly, homohexamer. Zn(2+) is required as a cofactor.

The protein resides in the cell inner membrane. Its function is as follows. Acts as a processive, ATP-dependent zinc metallopeptidase for both cytoplasmic and membrane proteins. Plays a role in the quality control of integral membrane proteins. The polypeptide is ATP-dependent zinc metalloprotease FtsH (Karelsulcia muelleri (strain DMIN) (Sulcia muelleri)).